The following is a 181-amino-acid chain: Swi1-interacting protein swi3 (181 aa).

Residues Met1–Lys47 form a disordered region. Over residues Gly9 to Glu27 the composition is skewed to basic and acidic residues. Acidic residues predominate over residues Glu28–Pro39.

The protein belongs to the CSM3 family. As to quaternary structure, fork protection complex (FPC) consisting of swi1 and swi3 interacts with mat1 cis-acting sequences and mat1-proximal polar-terminator of replication (RTS1).

The protein localises to the nucleus. In terms of biological role, forms a fork protection complex (FPC) with swi1. FPC coordinates leading and lagging strand synthesis and moves with the replication fork. It is required for programmed fork-pausing which is necessary for mating-type switching. FPC stabilizes replication forks in a configuration that is recognized by replication checkpoint sensors. It is involved in termination at the mat1-proximal polar-terminator of replication (RTS1) and also required for activation of the Rad53-like checkpoint kinase cds1. This is Swi1-interacting protein swi3 (swi3) from Schizosaccharomyces pombe (strain 972 / ATCC 24843) (Fission yeast).